Here is a 73-residue protein sequence, read N- to C-terminus: Conotoxin Bt11.1 (73 aa).

The first 20 residues, 1 to 20 (MKLCVAFLLVLVILPSVIGG), serve as a signal peptide directing secretion. A propeptide spanning residues 21 to 35 (KPSERTLSGATRRGD) is cleaved from the precursor. 4 disulfides stabilise this stretch: cysteine 39-cysteine 53, cysteine 46-cysteine 58, cysteine 52-cysteine 63, and cysteine 57-cysteine 70.

It belongs to the conotoxin I1 superfamily. Expressed by the venom duct.

Its subcellular location is the secreted. This is Conotoxin Bt11.1 from Conus betulinus (Beech cone).